Here is a 364-residue protein sequence, read N- to C-terminus: Geranylgeranyl pyrophosphate synthase janG (364 aa).

Residues lysine 83, arginine 86, and histidine 115 each coordinate isopentenyl diphosphate. 2 residues coordinate Mg(2+): aspartate 122 and aspartate 126. Arginine 131 contributes to the dimethylallyl diphosphate binding site. Arginine 132 contacts isopentenyl diphosphate. The dimethylallyl diphosphate site is built by lysine 209, threonine 210, and glutamine 243. Aspartate 246 lines the Mg(2+) pocket. Dimethylallyl diphosphate-binding residues include asparagine 250, lysine 260, and lysine 270.

This sequence belongs to the FPP/GGPP synthase family. It depends on Mg(2+) as a cofactor.

It carries out the reaction isopentenyl diphosphate + dimethylallyl diphosphate = (2E)-geranyl diphosphate + diphosphate. The enzyme catalyses isopentenyl diphosphate + (2E)-geranyl diphosphate = (2E,6E)-farnesyl diphosphate + diphosphate. It catalyses the reaction isopentenyl diphosphate + (2E,6E)-farnesyl diphosphate = (2E,6E,10E)-geranylgeranyl diphosphate + diphosphate. Its pathway is secondary metabolite biosynthesis. Its function is as follows. Geranylgeranyl pyrophosphate synthase; part of the gene cluster that mediates the biosynthesis of the indole diterpenes janthitremanes such as shearinine K or shearinine A. The geranylgeranyl diphosphate (GGPP) synthase janG catalyzes the first step in janthitremane biosynthesis via conversion of farnesyl pyrophosphate and isopentyl pyrophosphate into geranylgeranyl pyrophosphate (GGPP). Condensation of indole-3-glycerol phosphate with GGPP by the prenyl transferase janC then forms 3-geranylgeranylindole (3-GGI). Epoxidation by the FAD-dependent monooxygenase janM leads to a epoxidized-GGI that is substrate of the terpene cyclase janB for cyclization to yield paspaline. Paspaline is subsequently converted to 13-desoxypaspaline by the cytochrome P450 monooxygenase janP, via beta-PC-M6 in a series of alpha-face oxidations. The cytochrome P450 monooxygenase janQ is proposed to carry out sequential beta-face oxidation steps at C-7 and C-13 of 13-desoxypaspaline to form paspalicine and paspalinine respectively. The indole diterpene prenyltransferase janD may then convert paspalinine into shearinine K which is substrate of janO and/or additional enzymes for oxidation and cyclization to generate shearinine A. In Penicillium janthinellum (Penicillium vitale), this protein is Geranylgeranyl pyrophosphate synthase janG.